The chain runs to 229 residues: Cytidylate kinase (229 aa).

Residue 10 to 18 coordinates ATP; it reads GHSSSGKST.

The protein belongs to the cytidylate kinase family. Type 1 subfamily.

It is found in the cytoplasm. The catalysed reaction is CMP + ATP = CDP + ADP. It catalyses the reaction dCMP + ATP = dCDP + ADP. This chain is Cytidylate kinase, found in Parabacteroides distasonis (strain ATCC 8503 / DSM 20701 / CIP 104284 / JCM 5825 / NCTC 11152).